Here is a 446-residue protein sequence, read N- to C-terminus: F-box/LRR-repeat protein At4g29420 (446 aa).

In terms of domain architecture, F-box spans 1-51; sequence MDELPPELWIKILSRINDSESLARCRVASKTLNSLSREVRAVNLICTWSRY. 8 LRR repeats span residues 59-84, 103-130, 135-160, 181-206, 223-248, 265-289, 318-343, and 382-407; these read VVTP…SVGV, DLYL…SISD, SCWR…EVKN, FIRL…NLIG, CHWT…KLKC, HLSV…ELVS, QSER…SLSP, and NVHQ…RLMI.

In Arabidopsis thaliana (Mouse-ear cress), this protein is F-box/LRR-repeat protein At4g29420.